A 167-amino-acid chain; its full sequence is Small heat shock protein C1 (167 aa).

In terms of domain architecture, sHSP spans 59 to 167; sequence PLYESNSIKS…EQDAREITIN (109 aa).

It belongs to the small heat shock protein (HSP20) family.

The polypeptide is Small heat shock protein C1 (hspC1) (Rickettsia felis (strain ATCC VR-1525 / URRWXCal2) (Rickettsia azadi)).